We begin with the raw amino-acid sequence, 128 residues long: MPFIYRRRVQFYETDAQGIVHHSNYFRYFEEARGEFLRSKGFPYSKMRDMGLEVVLLNAYCEYKKPLFYDDVFEVHLNLEELSRFTFTFSYIVFKEDIAVAKANTKHCMVKNGKIVSIPKEVLEVLKD.

D15 is an active-site residue.

It belongs to the 4-hydroxybenzoyl-CoA thioesterase family.

In Aquifex aeolicus (strain VF5), this protein is Putative esterase aq_1494.